A 476-amino-acid chain; its full sequence is Sulfate adenylyltransferase subunit 1 (476 aa).

The tr-type G domain occupies 24 to 243; that stretch reads KSLLRFLTCG…VDVEKEKEAG (220 aa). The segment at 33–40 is G1; it reads GSVDDGKS. GTP is bound at residue 33–40; sequence GSVDDGKS. Residues 91 to 95 form a G2 region; it reads GITID. The segment at 112-115 is G3; it reads DTPG. GTP-binding positions include 112 to 116 and 167 to 170; these read DTPGH and NKMD. The interval 167 to 170 is G4; sequence NKMD. The interval 205–207 is G5; that stretch reads SAL.

This sequence belongs to the TRAFAC class translation factor GTPase superfamily. Classic translation factor GTPase family. CysN/NodQ subfamily. In terms of assembly, heterodimer composed of CysD, the smaller subunit, and CysN.

It catalyses the reaction sulfate + ATP + H(+) = adenosine 5'-phosphosulfate + diphosphate. It participates in sulfur metabolism; hydrogen sulfide biosynthesis; sulfite from sulfate: step 1/3. Functionally, with CysD forms the ATP sulfurylase (ATPS) that catalyzes the adenylation of sulfate producing adenosine 5'-phosphosulfate (APS) and diphosphate, the first enzymatic step in sulfur assimilation pathway. APS synthesis involves the formation of a high-energy phosphoric-sulfuric acid anhydride bond driven by GTP hydrolysis by CysN coupled to ATP hydrolysis by CysD. In Vibrio vulnificus (strain YJ016), this protein is Sulfate adenylyltransferase subunit 1.